Reading from the N-terminus, the 557-residue chain is Urocanate hydratase (557 aa).

A disordered region spans residues 1 to 20; sequence MSNPRHNEREVRSPRGDELN. NAD(+)-binding positions include 52–53, Q130, 176–178, E196, R201, 242–243, 263–267, 273–274, and Y322; these read GG, GMG, NA, QTSAH, and YL. C410 is a catalytic residue. NAD(+) is bound at residue G492.

Belongs to the urocanase family. NAD(+) is required as a cofactor.

The protein localises to the cytoplasm. It catalyses the reaction 4-imidazolone-5-propanoate = trans-urocanate + H2O. The protein operates within amino-acid degradation; L-histidine degradation into L-glutamate; N-formimidoyl-L-glutamate from L-histidine: step 2/3. Its function is as follows. Catalyzes the conversion of urocanate to 4-imidazolone-5-propionate. This Brucella suis (strain ATCC 23445 / NCTC 10510) protein is Urocanate hydratase.